The chain runs to 221 residues: Cytidylate kinase (221 aa).

11-19 contributes to the ATP binding site; that stretch reads GPTASGKGT.

This sequence belongs to the cytidylate kinase family. Type 1 subfamily.

It is found in the cytoplasm. It catalyses the reaction CMP + ATP = CDP + ADP. It carries out the reaction dCMP + ATP = dCDP + ADP. This chain is Cytidylate kinase, found in Cupriavidus pinatubonensis (strain JMP 134 / LMG 1197) (Cupriavidus necator (strain JMP 134)).